The primary structure comprises 316 residues: Lys-63-specific deubiquitinase BRCC36 (316 aa).

Position 2 is an N-acetylalanine (alanine 2). The MPN domain maps to 12 to 179 (VHLESDAFLV…YTCFQSIQAQ (168 aa)). The Zn(2+) site is built by histidine 122, histidine 124, and aspartate 135. A JAMM motif motif is present at residues 122 to 135 (HSHPHITVWPSHVD). Serine 258 carries the post-translational modification Phosphoserine.

The protein belongs to the peptidase M67A family. BRCC36 subfamily. As to quaternary structure, component of the ARISC complex, at least composed of UIMC1/RAP80, ABRAXAS1, BRCC3/BRCC36, BABAM2 and BABAM1/NBA1. Component of the BRCA1-A complex, at least composed of BRCA1, BARD1, UIMC1/RAP80, ABRAXAS1, BRCC3/BRCC36, BABAM2 and BABAM1/NBA1. In the BRCA1-A complex, interacts directly with ABRAXAS1 and BABAM2. Component of the BRISC complex, at least composed of ABRAXAS2, BRCC3/BRCC36, BABAM2 and BABAM1/NBA1. Identified in a complex with SHMT2 and the other subunits of the BRISC complex. In the BRISC complex, interacts directly with ABRAXAS2. Identified in a complex with ABRAXAS2 and NUMA1. The BRISC complex interacts with the CSN complex. Component of the BRCA1/BRCA2 containing complex (BRCC), which also contains BRCA1, BRCA2, BARD1, BABAM2 and RAD51. BRCC is a ubiquitin E3 ligase complex that enhances cellular survival following DNA damage. Interacts with BRCA1. Binds polyubiquitin. Interacts with PWWP2B. Interacts with HDAC1; this interaction is enhanced in the presence of PWWP2B. Zn(2+) serves as cofactor.

The protein resides in the nucleus. It is found in the cytoplasm. The protein localises to the cytoskeleton. Its subcellular location is the spindle pole. Functionally, metalloprotease that specifically cleaves 'Lys-63'-linked polyubiquitin chains. Does not have activity toward 'Lys-48'-linked polyubiquitin chains. Component of the BRCA1-A complex, a complex that specifically recognizes 'Lys-63'-linked ubiquitinated histones H2A and H2AX at DNA lesions sites, leading to target the BRCA1-BARD1 heterodimer to sites of DNA damage at double-strand breaks (DSBs). In the BRCA1-A complex, it specifically removes 'Lys-63'-linked ubiquitin on histones H2A and H2AX, antagonizing the RNF8-dependent ubiquitination at double-strand breaks (DSBs). Catalytic subunit of the BRISC complex, a multiprotein complex that specifically cleaves 'Lys-63'-linked ubiquitin in various substrates. Mediates the specific 'Lys-63'-specific deubiquitination associated with the COP9 signalosome complex (CSN), via the interaction of the BRISC complex with the CSN complex. The BRISC complex is required for normal mitotic spindle assembly and microtubule attachment to kinetochores via its role in deubiquitinating NUMA1. Plays a role in interferon signaling via its role in the deubiquitination of the interferon receptor IFNAR1; deubiquitination increases IFNAR1 activity by enhancing its stability and cell surface expression. Acts as a regulator of the NLRP3 inflammasome by mediating deubiquitination of NLRP3, leading to NLRP3 inflammasome assembly. Down-regulates the response to bacterial lipopolysaccharide (LPS) via its role in IFNAR1 deubiquitination. Deubiquitinates HDAC1 and PWWP2B leading to their stabilization. The polypeptide is Lys-63-specific deubiquitinase BRCC36 (BRCC3) (Callithrix jacchus (White-tufted-ear marmoset)).